The sequence spans 387 residues: 4-hydroxy-3-methylbut-2-en-1-yl diphosphate synthase (flavodoxin) (387 aa).

The [4Fe-4S] cluster site is built by cysteine 280, cysteine 283, cysteine 315, and glutamate 322.

Belongs to the IspG family. It depends on [4Fe-4S] cluster as a cofactor.

The enzyme catalyses (2E)-4-hydroxy-3-methylbut-2-enyl diphosphate + oxidized [flavodoxin] + H2O + 2 H(+) = 2-C-methyl-D-erythritol 2,4-cyclic diphosphate + reduced [flavodoxin]. The protein operates within isoprenoid biosynthesis; isopentenyl diphosphate biosynthesis via DXP pathway; isopentenyl diphosphate from 1-deoxy-D-xylulose 5-phosphate: step 5/6. Functionally, converts 2C-methyl-D-erythritol 2,4-cyclodiphosphate (ME-2,4cPP) into 1-hydroxy-2-methyl-2-(E)-butenyl 4-diphosphate. This chain is 4-hydroxy-3-methylbut-2-en-1-yl diphosphate synthase (flavodoxin), found in Mycobacterium bovis (strain ATCC BAA-935 / AF2122/97).